A 401-amino-acid chain; its full sequence is Ureide permease 4 (401 aa).

The Extracellular segment spans residues 1-10 (MYVVESKAGA). A helical transmembrane segment spans residues 11 to 31 (IGCMILSLCCLGSWPAILTLL). At 32–40 (ERRGRLPQH) the chain is on the cytoplasmic side. The helical transmembrane segment at 41-61 (TFLDFATANLLAAIVIAFSLG) threads the bilayer. At 62 to 81 (EIGKSTFLKPDFTTQLPQDN) the chain is on the extracellular side. Residues 82 to 102 (WPSVLLAVAGGVLLSIGNLAT) form a helical membrane-spanning segment. The Cytoplasmic segment spans residues 103-104 (QY). Residues 105 to 125 (AFAFVGLSVTEVITASITVVI) form a helical membrane-spanning segment. Over 126–141 (GTTLNYFLDNKINKAE) the chain is Extracellular. The helical transmembrane segment at 142–162 (ILFPGVGCFLIAVFLGAAVHA) threads the bilayer. The Cytoplasmic segment spans residues 163–231 (SNAADVKEKL…KRAIKVFGKS (69 aa)). 224–231 (AIKVFGKS) is an ATP binding site. Residues 232-252 (IMIGLFITLFAGISLSLFSPA) traverse the membrane as a helical segment. Residues 253 to 275 (FNLATNDQWSTLPKGVPKLVVYT) are Extracellular-facing. The chain crosses the membrane as a helical span at residues 276–296 (AFFYFSIAGFLISLILNLIFL). Over 297-318 (YRPMVGLARSSLKKYIYDSKGR) the chain is Cytoplasmic. Residues 319–339 (GWAVFAGFLCGFGNGLQFMGG) traverse the membrane as a helical segment. Over 340 to 344 (QAAGY) the chain is Extracellular. The chain crosses the membrane as a helical span at residues 345-365 (AAADSVQALPLVSTFWGIVLF). Residues 366 to 374 (GEYRKSSKR) are Cytoplasmic-facing. The helical transmembrane segment at 375–395 (TYALLVSMLAMFVAAVAILMA) threads the bilayer. The Extracellular portion of the chain corresponds to 396 to 401 (SSGHRK).

Belongs to the plant ureide permease (TC 2.A.7.19) family. Expressed in developing seedlings, flower filaments and stigma, and the top and bottom parts of carpels in siliques.

The protein localises to the membrane. Functionally, proton-coupled transporter that transports a wide spectrum of oxo derivatives of heterocyclic nitrogen compounds. This chain is Ureide permease 4, found in Arabidopsis thaliana (Mouse-ear cress).